Reading from the N-terminus, the 24-residue chain is Homotarsinin (24 aa).

Position 24 is an arginine amide (R24).

As to quaternary structure, homodimer; disulfide-linked. As to expression, expressed by the skin glands.

The protein localises to the secreted. Antimicrobial peptide. Active against Gram-negative bacteria E.coli ATCC 25922 (MIC=1.5 uM) and P.aeruginosa ATTC 27853 (MIC=23.2 uM) and against Gram-positive bacterium S.aureus ATCC 29313 (MIC=11.6 uM). Has no hemolytic activity. Associates with and disrupts membranes in vitro. The sequence is that of Homotarsinin from Phyllomedusa tarsius (Brownbelly leaf frog).